The following is a 96-amino-acid chain: Large ribosomal subunit protein bL27 (96 aa).

The disordered stretch occupies residues 12–33 (HKGGGSSANGRNSAGRRLGAKA). Over residues 19-28 (ANGRNSAGRR) the composition is skewed to low complexity.

The protein belongs to the bacterial ribosomal protein bL27 family.

The chain is Large ribosomal subunit protein bL27 from Lactobacillus helveticus (strain DPC 4571).